The following is a 786-amino-acid chain: Endonuclease MutS2 (786 aa).

Residue 332–339 (GPNTGGKT) participates in ATP binding. The Smr domain maps to 711–786 (IDLRGMDSEE…GTGVTVVILK (76 aa)).

The protein belongs to the DNA mismatch repair MutS family. MutS2 subfamily. As to quaternary structure, homodimer. Binds to stalled ribosomes, contacting rRNA.

Its function is as follows. Endonuclease that is involved in the suppression of homologous recombination and thus may have a key role in the control of bacterial genetic diversity. Acts as a ribosome collision sensor, splitting the ribosome into its 2 subunits. Detects stalled/collided 70S ribosomes which it binds and splits by an ATP-hydrolysis driven conformational change. Acts upstream of the ribosome quality control system (RQC), a ribosome-associated complex that mediates the extraction of incompletely synthesized nascent chains from stalled ribosomes and their subsequent degradation. Probably generates substrates for RQC. This chain is Endonuclease MutS2, found in Clostridium perfringens (strain ATCC 13124 / DSM 756 / JCM 1290 / NCIMB 6125 / NCTC 8237 / Type A).